Reading from the N-terminus, the 384-residue chain is S-adenosylmethionine synthase (384 aa).

H16 provides a ligand contact to ATP. Residue D18 coordinates Mg(2+). K(+) is bound at residue E44. Residues E57 and Q100 each contribute to the L-methionine site. The interval 100 to 110 is flexible loop; that stretch reads QSADIAMGVDE. ATP is bound by residues 165-167, D240, 246-247, A263, and K267; these read DAK and RK. D240 contacts L-methionine. K271 serves as a coordination point for L-methionine.

Belongs to the AdoMet synthase family. Homotetramer; dimer of dimers. The cofactor is Mg(2+). It depends on K(+) as a cofactor.

The protein resides in the cytoplasm. The enzyme catalyses L-methionine + ATP + H2O = S-adenosyl-L-methionine + phosphate + diphosphate. The protein operates within amino-acid biosynthesis; S-adenosyl-L-methionine biosynthesis; S-adenosyl-L-methionine from L-methionine: step 1/1. In terms of biological role, catalyzes the formation of S-adenosylmethionine (AdoMet) from methionine and ATP. The overall synthetic reaction is composed of two sequential steps, AdoMet formation and the subsequent tripolyphosphate hydrolysis which occurs prior to release of AdoMet from the enzyme. This Cellvibrio japonicus (strain Ueda107) (Pseudomonas fluorescens subsp. cellulosa) protein is S-adenosylmethionine synthase.